The following is a 259-amino-acid chain: DNA-directed RNA polymerase 30 kDa polypeptide (259 aa).

The segment at 155 to 195 (YNTPCPNCKSRNTTPMMIQTRAADEPPLVRHACRDCKQHFK) adopts a TFIIS-type zinc-finger fold. Residues Cys159, Cys162, Cys187, and Cys190 each contribute to the Zn(2+) site. Residues 220–259 (EILPDNNPSPPESPEPASPIDDGLIRATFDRNDEPPEDDE) form a disordered region. Residues 226 to 236 (NPSPPESPEPA) are compositionally biased toward pro residues.

Belongs to the poxviridae DNA-directed RNA polymerase 30 kDa subunit family. In terms of assembly, the DNA-dependent RNA polymerase (vRNAP) consists of eight subunits encoded by early viral genes and termed according to their apparent molecular masses Rpo147, Rpo132, Rpo35, Rpo30, Rpo22, Rpo19, Rpo18, and Rpo7. The same holoenzyme, with the addition of the transcription-specificity factor RAP94, is used for early gene expression.

It is found in the virion. The protein resides in the host cytoplasm. It catalyses the reaction RNA(n) + a ribonucleoside 5'-triphosphate = RNA(n+1) + diphosphate. Its function is as follows. Part of the DNA-dependent RNA polymerase which catalyzes the transcription of viral DNA into RNA using the four ribonucleoside triphosphates as substrates. Responsible for the transcription of early, intermediate and late genes. DNA-dependent RNA polymerase associates with the early transcription factor (ETF), itself composed of OPG118 and OPG134, thereby allowing the early genes transcription. Late transcription, and probably also intermediate transcription, require newly synthesized RNA polymerase. This is DNA-directed RNA polymerase 30 kDa polypeptide (OPG066) from Homo sapiens (Human).